The primary structure comprises 247 residues: DNA polymerase sliding clamp (247 aa).

The protein belongs to the PCNA family. As to quaternary structure, homotrimer. The subunits circularize to form a toroid; DNA passes through its center. Replication factor C (RFC) is required to load the toroid on the DNA.

Sliding clamp subunit that acts as a moving platform for DNA processing. Responsible for tethering the catalytic subunit of DNA polymerase and other proteins to DNA during high-speed replication. The sequence is that of DNA polymerase sliding clamp from Haloarcula marismortui (strain ATCC 43049 / DSM 3752 / JCM 8966 / VKM B-1809) (Halobacterium marismortui).